A 457-amino-acid polypeptide reads, in one-letter code: UDP-glycosyltransferase 74C1 (457 aa).

UDP-alpha-D-glucose contacts are provided by residues threonine 281, 336-338 (VPQ), 353-361 (HCGWNSTLE), and 375-378 (WTDQ).

The protein belongs to the UDP-glycosyltransferase family.

The protein is UDP-glycosyltransferase 74C1 (UGT74C1) of Arabidopsis thaliana (Mouse-ear cress).